The primary structure comprises 242 residues: Uridylate kinase (242 aa).

An ATP-binding site is contributed by 11–14 (KLSG). Residues 19 to 24 (GEKGAG) are involved in allosteric activation by GTP. G53 provides a ligand contact to UMP. ATP-binding residues include G54 and R58. UMP is bound by residues D73 and 134 to 141 (IGSPYFST). Residues N162, Y168, and D171 each coordinate ATP.

It belongs to the UMP kinase family. As to quaternary structure, homohexamer.

It is found in the cytoplasm. It catalyses the reaction UMP + ATP = UDP + ADP. Its pathway is pyrimidine metabolism; CTP biosynthesis via de novo pathway; UDP from UMP (UMPK route): step 1/1. Allosterically activated by GTP. Inhibited by UTP. Catalyzes the reversible phosphorylation of UMP to UDP. This is Uridylate kinase from Streptococcus pyogenes serotype M2 (strain MGAS10270).